The following is a 159-amino-acid chain: NADH-quinone oxidoreductase subunit B (159 aa).

Positions 32, 33, 97, and 126 each coordinate [4Fe-4S] cluster.

The protein belongs to the complex I 20 kDa subunit family. NDH-1 is composed of 14 different subunits. Subunits NuoB, C, D, E, F, and G constitute the peripheral sector of the complex. It depends on [4Fe-4S] cluster as a cofactor.

It localises to the cell inner membrane. The enzyme catalyses a quinone + NADH + 5 H(+)(in) = a quinol + NAD(+) + 4 H(+)(out). Its function is as follows. NDH-1 shuttles electrons from NADH, via FMN and iron-sulfur (Fe-S) centers, to quinones in the respiratory chain. The immediate electron acceptor for the enzyme in this species is believed to be ubiquinone. Couples the redox reaction to proton translocation (for every two electrons transferred, four hydrogen ions are translocated across the cytoplasmic membrane), and thus conserves the redox energy in a proton gradient. In Helicobacter acinonychis (strain Sheeba), this protein is NADH-quinone oxidoreductase subunit B.